A 315-amino-acid chain; its full sequence is Lipoyl synthase (315 aa).

[4Fe-4S] cluster-binding residues include C62, C67, C73, C88, C92, C95, and S302. The Radical SAM core domain occupies 73-291 (CFGHGTATFM…GELAKKLGFS (219 aa)).

Belongs to the radical SAM superfamily. Lipoyl synthase family. The cofactor is [4Fe-4S] cluster.

The protein localises to the cytoplasm. The enzyme catalyses [[Fe-S] cluster scaffold protein carrying a second [4Fe-4S](2+) cluster] + N(6)-octanoyl-L-lysyl-[protein] + 2 oxidized [2Fe-2S]-[ferredoxin] + 2 S-adenosyl-L-methionine + 4 H(+) = [[Fe-S] cluster scaffold protein] + N(6)-[(R)-dihydrolipoyl]-L-lysyl-[protein] + 4 Fe(3+) + 2 hydrogen sulfide + 2 5'-deoxyadenosine + 2 L-methionine + 2 reduced [2Fe-2S]-[ferredoxin]. Its pathway is protein modification; protein lipoylation via endogenous pathway; protein N(6)-(lipoyl)lysine from octanoyl-[acyl-carrier-protein]: step 2/2. Catalyzes the radical-mediated insertion of two sulfur atoms into the C-6 and C-8 positions of the octanoyl moiety bound to the lipoyl domains of lipoate-dependent enzymes, thereby converting the octanoylated domains into lipoylated derivatives. The sequence is that of Lipoyl synthase from Coxiella burnetii (strain CbuG_Q212) (Coxiella burnetii (strain Q212)).